The primary structure comprises 205 residues: Meiotic nuclear division protein 1 homolog (205 aa).

Positions 79 to 147 (LHARKRKLET…CADLEKYKEC (69 aa)) form a coiled coil.

Belongs to the MND1 family.

It localises to the nucleus. Functionally, required for proper homologous chromosome pairing and efficient cross-over and intragenic recombination during meiosis. Stimulates both dmc1- and rad51-mediated homologous strand assimilation, which is required for the resolution of meiotic double-strand breaks. This chain is Meiotic nuclear division protein 1 homolog, found in Xenopus laevis (African clawed frog).